The sequence spans 387 residues: Alanine racemase (387 aa).

The active-site Proton acceptor; specific for D-alanine is the lysine 48. The residue at position 48 (lysine 48) is an N6-(pyridoxal phosphate)lysine. A substrate-binding site is contributed by arginine 146. Tyrosine 267 acts as the Proton acceptor; specific for L-alanine in catalysis. Residue methionine 315 participates in substrate binding.

The protein belongs to the alanine racemase family. Requires pyridoxal 5'-phosphate as cofactor.

The enzyme catalyses L-alanine = D-alanine. It functions in the pathway amino-acid biosynthesis; D-alanine biosynthesis; D-alanine from L-alanine: step 1/1. Its function is as follows. Catalyzes the interconversion of L-alanine and D-alanine. May also act on other amino acids. The polypeptide is Alanine racemase (alr) (Methylacidiphilum infernorum (isolate V4) (Methylokorus infernorum (strain V4))).